A 377-amino-acid chain; its full sequence is Putative glutamate--cysteine ligase 2 (377 aa).

The protein belongs to the glutamate--cysteine ligase type 2 family. YbdK subfamily.

The catalysed reaction is L-cysteine + L-glutamate + ATP = gamma-L-glutamyl-L-cysteine + ADP + phosphate + H(+). ATP-dependent carboxylate-amine ligase which exhibits weak glutamate--cysteine ligase activity. In Pseudomonas aeruginosa (strain LESB58), this protein is Putative glutamate--cysteine ligase 2.